A 224-amino-acid chain; its full sequence is 3-dehydroquinate dehydratase (224 aa).

3-dehydroquinate is bound by residues Glu-30–Arg-32 and Arg-62. His-118 serves as the catalytic Proton donor/acceptor. The Schiff-base intermediate with substrate role is filled by Lys-143. 3-dehydroquinate contacts are provided by Arg-186, Ser-205, and Gln-209.

The protein belongs to the type-I 3-dehydroquinase family. As to quaternary structure, homodimer.

It carries out the reaction 3-dehydroquinate = 3-dehydroshikimate + H2O. The protein operates within metabolic intermediate biosynthesis; chorismate biosynthesis; chorismate from D-erythrose 4-phosphate and phosphoenolpyruvate: step 3/7. In terms of biological role, involved in the third step of the chorismate pathway, which leads to the biosynthesis of aromatic amino acids. Catalyzes the cis-dehydration of 3-dehydroquinate (DHQ) and introduces the first double bond of the aromatic ring to yield 3-dehydroshikimate. The polypeptide is 3-dehydroquinate dehydratase (Streptococcus suis (strain 98HAH33)).